A 212-amino-acid polypeptide reads, in one-letter code: Mediator of RNA polymerase II transcription subunit 20 (212 aa).

This sequence belongs to the Mediator complex subunit 20 family. Component of the Mediator complex, which is composed of MED1, MED4, MED6, MED7, MED8, MED9, MED10, MED11, MED12, MED13, MED13L, MED14, MED15, MED16, MED17, MED18, MED19, MED20, MED21, MED22, MED23, MED24, MED25, MED26, MED27, MED29, MED30, MED31, CCNC, CDK8 and CDC2L6/CDK11. The MED12, MED13, CCNC and CDK8 subunits form a distinct module termed the CDK8 module. Mediator containing the CDK8 module is less active than Mediator lacking this module in supporting transcriptional activation. Individual preparations of the Mediator complex lacking one or more distinct subunits have been variously termed ARC, CRSP, DRIP, PC2, SMCC and TRAP. Interacts with PPARG.

The protein resides in the nucleus. Its function is as follows. Component of the Mediator complex, a coactivator involved in the regulated transcription of nearly all RNA polymerase II-dependent genes. Mediator functions as a bridge to convey information from gene-specific regulatory proteins to the basal RNA polymerase II transcription machinery. Mediator is recruited to promoters by direct interactions with regulatory proteins and serves as a scaffold for the assembly of a functional preinitiation complex with RNA polymerase II and the general transcription factors. The polypeptide is Mediator of RNA polymerase II transcription subunit 20 (Med20) (Mus musculus (Mouse)).